A 142-amino-acid chain; its full sequence is Putative pre-16S rRNA nuclease (142 aa).

The protein belongs to the YqgF nuclease family.

Its subcellular location is the cytoplasm. In terms of biological role, could be a nuclease involved in processing of the 5'-end of pre-16S rRNA. This is Putative pre-16S rRNA nuclease from Staphylococcus haemolyticus (strain JCSC1435).